We begin with the raw amino-acid sequence, 246 residues long: 14-3-3 protein beta/alpha (246 aa).

An N-acetylmethionine modification is found at methionine 1. N-acetylthreonine; in 14-3-3 protein beta/alpha, N-terminally processed is present on threonine 2. Threonine 2 carries the phosphothreonine modification. Lysine 5 is subject to N6-acetyllysine. Lysine 51 bears the N6-acetyllysine; alternate mark. Lysine 51 participates in a covalent cross-link: Glycyl lysine isopeptide (Lys-Gly) (interchain with G-Cter in SUMO2); alternate. The residue at position 60 (serine 60) is a Phosphoserine. Lysine 70 bears the N6-acetyllysine mark. A 3'-nitrotyrosine mark is found at tyrosine 84 and tyrosine 106. Lysine 117 carries the post-translational modification N6-acetyllysine. Phosphoserine occurs at positions 186 and 232.

Belongs to the 14-3-3 family. In terms of assembly, homodimer. Interacts with SAMSN1 and PRKCE. Interacts with AKAP13. Interacts with SSH1 and TORC2/CRTC2. Interacts with ABL1; the interaction results in cytoplasmic location of ABL1 and inhibition of cABL-mediated apoptosis. Interacts with ROR2 (dimer); the interaction results in phosphorylation of YWHAB on tyrosine residues. Interacts with GAB2. Interacts with YAP1 (phosphorylated form). Interacts with the phosphorylated (by AKT1) form of SRPK2. Interacts with PKA-phosphorylated AANAT. Interacts with MYO1C. Interacts with SIRT2. Interacts with the 'Thr-369' phosphorylated form of DAPK2. Interacts with PI4KB, TBC1D22A and TBC1D22B. Interacts with the 'Ser-1134' and 'Ser-1161' phosphorylated form of SOS1. Interacts (via phosphorylated form) with YWHAB; this interaction occurs in a protein kinase AKT1-dependent manner. Interacts with SLITRK1. Interacts with SYNPO2 (phosphorylated form); YWHAB competes with ACTN2 for interaction with SYNPO2. Interacts with RIPOR2 (via phosphorylated form); this interaction occurs in a chemokine-dependent manner and does not compete for binding of RIPOR2 with RHOA nor blocks inhibition of RIPOR2-mediated RHOA activity. Interacts with MARK2 and MARK3. Interacts with TESK1; the interaction is dependent on the phosphorylation of TESK1 'Ser-439' and inhibits TESK1 kinase activity. Interacts with MEFV. Interacts with HDAC4. Interacts with ADAM22 (via C-terminus). Post-translationally, isoform alpha differs from isoform beta in being phosphorylated. Phosphorylated on Ser-60 by protein kinase C delta type catalytic subunit in a sphingosine-dependent fashion. In terms of processing, isoform Short contains a N-acetylmethionine at position 1.

It is found in the cytoplasm. It localises to the melanosome. Adapter protein implicated in the regulation of a large spectrum of both general and specialized signaling pathways. Binds to a large number of partners, usually by recognition of a phosphoserine or phosphothreonine motif. Binding generally results in the modulation of the activity of the binding partner. Negative regulator of osteogenesis. Blocks the nuclear translocation of the phosphorylated form (by AKT1) of SRPK2 and antagonizes its stimulatory effect on cyclin D1 expression resulting in blockage of neuronal apoptosis elicited by SRPK2. Negative regulator of signaling cascades that mediate activation of MAP kinases via AKAP13. The chain is 14-3-3 protein beta/alpha (Ywhab) from Mus musculus (Mouse).